A 153-amino-acid chain; its full sequence is Transcriptional repressor NrdR (153 aa).

A zinc finger lies at 3-34 (CPFCNNINTQVKDSRAIEDDILIRRRRICLVC). The region spanning 49 to 139 (FMVIKKNGET…VYMNFKNIND (91 aa)) is the ATP-cone domain.

Belongs to the NrdR family. Requires Zn(2+) as cofactor.

Functionally, negatively regulates transcription of bacterial ribonucleotide reductase nrd genes and operons by binding to NrdR-boxes. The sequence is that of Transcriptional repressor NrdR from Ehrlichia canis (strain Jake).